Here is a 296-residue protein sequence, read N- to C-terminus: MEQFRNIGIIGRLGSSQVLDTVRRLKKFLLARHLHVILEDTIAEVLPGHGLQTSSRKLLGEVCDMVIVVGGDGSLLGAARALARHNIPVLGINRGSLGFLTDIRPDELEVKVAEVLDGHYLVENRFLLQAEVRRHAEAIGQGDALNDVVLHPGKSTRMIEFEIYIDGQFVCSQKADGLIVATPTGSTAYALSAGGPIMHPKLDAIVIVPMYPHTLSGRPIVVDGNSELKIVVSKDMQIYPQVSCDGQNHFTCAPGDTITVSKKAQKLRLIHPLDHNYYEVCRTKLGWGSRLGGGGD.

The active-site Proton acceptor is aspartate 72. NAD(+) is bound by residues aspartate 72 to glycine 73, asparagine 146 to aspartate 147, arginine 157, lysine 174, aspartate 176, threonine 187 to serine 192, and glutamine 247.

The protein belongs to the NAD kinase family. Requires a divalent metal cation as cofactor.

It localises to the cytoplasm. It catalyses the reaction NAD(+) + ATP = ADP + NADP(+) + H(+). Its function is as follows. Involved in the regulation of the intracellular balance of NAD and NADP, and is a key enzyme in the biosynthesis of NADP. Catalyzes specifically the phosphorylation on 2'-hydroxyl of the adenosine moiety of NAD to yield NADP. The polypeptide is NAD kinase (Pseudomonas fluorescens (strain ATCC BAA-477 / NRRL B-23932 / Pf-5)).